The sequence spans 138 residues: RutC family protein UK114 (138 aa).

The protein belongs to the RutC family.

Molecular chaperone. Seems to fulfill an ATP-independent, HSP70-like function in protein folding. May protect essential factors of cell proliferation during heat shock. No role in calpain activation. The sequence is that of RutC family protein UK114 from Drosophila melanogaster (Fruit fly).